A 473-amino-acid chain; its full sequence is ATP synthase subunit beta (473 aa).

Residue 158 to 165 (GGAGVGKT) coordinates ATP.

It belongs to the ATPase alpha/beta chains family. As to quaternary structure, F-type ATPases have 2 components, CF(1) - the catalytic core - and CF(0) - the membrane proton channel. CF(1) has five subunits: alpha(3), beta(3), gamma(1), delta(1), epsilon(1). CF(0) has three main subunits: a(1), b(2) and c(9-12). The alpha and beta chains form an alternating ring which encloses part of the gamma chain. CF(1) is attached to CF(0) by a central stalk formed by the gamma and epsilon chains, while a peripheral stalk is formed by the delta and b chains.

The protein resides in the cell membrane. The enzyme catalyses ATP + H2O + 4 H(+)(in) = ADP + phosphate + 5 H(+)(out). Its function is as follows. Produces ATP from ADP in the presence of a proton gradient across the membrane. The catalytic sites are hosted primarily by the beta subunits. This chain is ATP synthase subunit beta, found in Bacillus sp. (strain PS3).